The chain runs to 51 residues: Large ribosomal subunit protein eL39 (51 aa).

Residues 32-51 (KRRVTRSPARRHWRRQKLKA) are disordered.

It belongs to the eukaryotic ribosomal protein eL39 family.

The sequence is that of Large ribosomal subunit protein eL39 from Pyrobaculum calidifontis (strain DSM 21063 / JCM 11548 / VA1).